A 157-amino-acid polypeptide reads, in one-letter code: Crossover junction endodeoxyribonuclease RuvC (157 aa).

Catalysis depends on residues Asp-7, Glu-66, and Asp-139. Residues Asp-7, Glu-66, and Asp-139 each coordinate Mg(2+).

It belongs to the RuvC family. As to quaternary structure, homodimer which binds Holliday junction (HJ) DNA. The HJ becomes 2-fold symmetrical on binding to RuvC with unstacked arms; it has a different conformation from HJ DNA in complex with RuvA. In the full resolvosome a probable DNA-RuvA(4)-RuvB(12)-RuvC(2) complex forms which resolves the HJ. It depends on Mg(2+) as a cofactor.

It is found in the cytoplasm. It carries out the reaction Endonucleolytic cleavage at a junction such as a reciprocal single-stranded crossover between two homologous DNA duplexes (Holliday junction).. The RuvA-RuvB-RuvC complex processes Holliday junction (HJ) DNA during genetic recombination and DNA repair. Endonuclease that resolves HJ intermediates. Cleaves cruciform DNA by making single-stranded nicks across the HJ at symmetrical positions within the homologous arms, yielding a 5'-phosphate and a 3'-hydroxyl group; requires a central core of homology in the junction. The consensus cleavage sequence is 5'-(A/T)TT(C/G)-3'. Cleavage occurs on the 3'-side of the TT dinucleotide at the point of strand exchange. HJ branch migration catalyzed by RuvA-RuvB allows RuvC to scan DNA until it finds its consensus sequence, where it cleaves and resolves the cruciform DNA. The protein is Crossover junction endodeoxyribonuclease RuvC of Helicobacter pylori (strain Shi470).